Consider the following 459-residue polypeptide: MFS-type transporter SLC18B1 (459 aa).

M1 is modified (N-acetylmethionine). Residues 1 to 10 (MDEAGSPAPA) are compositionally biased toward low complexity. Residues 1–27 (MDEAGSPAPAGTGGGDDPGGSTRETSR) are disordered. Topologically, residues 1 to 33 (MDEAGSPAPAGTGGGDDPGGSTRETSRRLSREQ) are cytoplasmic. At S21 the chain carries Phosphoserine. Residues 34–54 (IFVLVSAASMNLGCMMTYSIL) form a helical membrane-spanning segment. Residues 55 to 70 (GPFFPKEAEKKGASNT) lie on the Extracellular side of the membrane. Residues 71 to 91 (MIGMIFGCYALFELLASLVFG) traverse the membrane as a helical segment. Residues 92-100 (KYLVHIGAK) lie on the Cytoplasmic side of the membrane. The chain crosses the membrane as a helical span at residues 101–121 (FMFIAGMFVSGGVTILFGVLD). Residues 122–127 (QLPEGP) are Extracellular-facing. A helical transmembrane segment spans residues 128 to 148 (IFIAMCFLVRIVDAIGFGAAI). Residues 149 to 167 (TASSSILAKAFPNNVATVM) are Cytoplasmic-facing. Residues 168 to 188 (GSLEVFSGLGLVAGPPLGGLL) form a helical membrane-spanning segment. The Extracellular segment spans residues 189–195 (YQSFGYE). A helical transmembrane segment spans residues 196 to 216 (VPFIFLGCIVLLMIPLNLYIL). Residues 217 to 235 (PSYAQESDPGKQSFWKLVT) lie on the Cytoplasmic side of the membrane. Residues 236–256 (LPKMGLLAFVIISLSSCFGFL) traverse the membrane as a helical segment. Over 257 to 274 (DPTLSLFVMEKFSLSTGY) the chain is Extracellular. The helical transmembrane segment at 275-295 (VGLVFLGLSLSYAISSPLFGL) threads the bilayer. At 296–306 (LSDKMPTLRKW) the chain is on the cytoplasmic side. Residues 307–327 (LLVFGNLITAGCYMLLGPVPL) form a helical membrane-spanning segment. The Extracellular portion of the chain corresponds to 328-333 (LHIKSQ). Residues 334-354 (LWLLVLVLVVNGISAGMSIIP) traverse the membrane as a helical segment. Over 355–379 (TFPEMLSCAYANGFEDSISTLGLVS) the chain is Cytoplasmic. The chain crosses the membrane as a helical span at residues 380 to 400 (GLFGAMWSVGAFMGPILGGFL). At 401-409 (CEKIGFEWA) the chain is on the extracellular side. Residues 410–430 (AAMQGLWTLLSGVSMALFYLW) traverse the membrane as a helical segment. At 431 to 459 (EDSTARRRSKAQNSLGTEEERAALLPNDT) the chain is on the cytoplasmic side. Residues 440–459 (KAQNSLGTEEERAALLPNDT) form a disordered region.

Belongs to the major facilitator superfamily. As to expression, widely expressed, with highest expression in the lung, pancreas and kidney. High expression in the CNS, particularly in the hypothalamus, the thalamus and the cerebellum. In the forebrain, abundantly expressed in the telencephalon, especially in the cerebral cortex layers, except layer 1, as well as in the induseum griseum, the piriform area, the taenia tecta, dorsal part and in the entorhinal area, lateral part. Lower levels in the bed anterior olfactory nucleus, posteroventral part and in layer two of the olfactory tubercle. In the amygdala, high levels observed in the intercalated nucleus and the medial nucleus. In the diencephalon, expressed in the nuclei in both the hypothalamus and thalamus. Among the hypothalamic areas, strongest expression in the arcuate nucleus and in the ventromedial nucleus, as well as in the suprachiasmatic nucleus, anterior nucleus, especially in its central part, and in the magnocellular division of the paraventricular nucleus. In the thalamus, highest levels in the medial habenula. Expression also observed in the paraventricular thalamic nucleus, parataenial nucleus, central medial nucleus, intermediodorsal nucleus and lateral dorsal nucleus. In the hindbrain, detected in the cerebellum and in the pons. In the midbrain and the medulla, expression levels were modest. In the midbrain, highest expression in the periaqueductal gray and all subdivisions of the interpeduncular nucleus, except for the caudal part. In the pons, the strongest labeling was seen in the nucleus incertus and in the tegmental nucleus. Expressed in bone marrow-derived mast cells (at protein level).

The protein resides in the cytoplasmic vesicle. The protein localises to the secretory vesicle membrane. Its subcellular location is the secretory vesicle. It is found in the synaptic vesicle membrane. It catalyses the reaction spermine(in) + n H(+)(out) = spermine(out) + n H(+)(in). It carries out the reaction spermidine(in) + n H(+)(out) = spermidine(out) + n H(+)(in). The enzyme catalyses serotonin(in) + n H(+)(out) = serotonin(out) + n H(+)(in). Its function is as follows. Proton-coupled polyamine antiporter involved in the translocation of polyamines from cytosol into secretory vesicles prior to their release via exocytosis. Uses the electrochemical proton gradient generated by a V-type proton-pumping ATPase to couple the efflux of protons with the uptake of a polyamine molecule. Facilitates vesicular storage of spermine and spermidine in astrocytes with an impact on glutamatergic neuronal transmission and memory formation. Upon antigen stimulation, regulates polyamine accumulation and release in mast cell secretory granules, which in turn potentiates mast cell degranulation and histamine secretion. The polypeptide is MFS-type transporter SLC18B1 (Mus musculus (Mouse)).